The chain runs to 174 residues: Alkyl hydroperoxide reductase AhpD (174 aa).

Residue C130 is the Proton donor of the active site. An intrachain disulfide couples C130 to C133. C133 acts as the Cysteine sulfenic acid (-SOH) intermediate in catalysis.

This sequence belongs to the AhpD family. In terms of assembly, homotrimer.

The enzyme catalyses N(6)-[(R)-dihydrolipoyl]-L-lysyl-[lipoyl-carrier protein] + a hydroperoxide = N(6)-[(R)-lipoyl]-L-lysyl-[lipoyl-carrier protein] + an alcohol + H2O. In terms of biological role, antioxidant protein with alkyl hydroperoxidase activity. Required for the reduction of the AhpC active site cysteine residues and for the regeneration of the AhpC enzyme activity. In Corynebacterium kroppenstedtii (strain DSM 44385 / JCM 11950 / CIP 105744 / CCUG 35717), this protein is Alkyl hydroperoxide reductase AhpD.